We begin with the raw amino-acid sequence, 900 residues long: Probable 2-oxoadipate dehydrogenase complex component E1 homolog (900 aa).

The protein belongs to the alpha-ketoglutarate dehydrogenase family. It depends on thiamine diphosphate as a cofactor.

Its subcellular location is the mitochondrion. It catalyses the reaction N(6)-[(R)-lipoyl]-L-lysyl-[protein] + 2-oxoadipate + H(+) = N(6)-[(R)-S(8)-glutaryldihydrolipoyl]-L-lysyl-[protein] + CO2. Functionally, 2-oxoadipate dehydrogenase (E1a) component of the 2-oxoadipate dehydrogenase complex (OADHC). Participates in the first step, rate limiting for the overall conversion of 2-oxoadipate (alpha-ketoadipate) to glutaryl-CoA and CO(2) catalyzed by the whole OADHC. Catalyzes the irreversible decarboxylation of 2-oxoadipate via the thiamine diphosphate (ThDP) cofactor and subsequent transfer of the decarboxylated acyl intermediate on an oxidized dihydrolipoyl group that is covalently amidated to the E2 enzyme (dihydrolipoyllysine-residue succinyltransferase or DLST). The polypeptide is Probable 2-oxoadipate dehydrogenase complex component E1 homolog (odhA) (Dictyostelium discoideum (Social amoeba)).